Consider the following 187-residue polypeptide: NADH-quinone oxidoreductase subunit B (187 aa).

Cysteine 46, cysteine 47, cysteine 112, and cysteine 141 together coordinate [4Fe-4S] cluster.

The protein belongs to the complex I 20 kDa subunit family. NDH-1 is composed of 14 different subunits. Subunits NuoB, C, D, E, F, and G constitute the peripheral sector of the complex. [4Fe-4S] cluster serves as cofactor.

The protein resides in the cell inner membrane. It catalyses the reaction a quinone + NADH + 5 H(+)(in) = a quinol + NAD(+) + 4 H(+)(out). Its function is as follows. NDH-1 shuttles electrons from NADH, via FMN and iron-sulfur (Fe-S) centers, to quinones in the respiratory chain. The immediate electron acceptor for the enzyme in this species is believed to be ubiquinone. Couples the redox reaction to proton translocation (for every two electrons transferred, four hydrogen ions are translocated across the cytoplasmic membrane), and thus conserves the redox energy in a proton gradient. This is NADH-quinone oxidoreductase subunit B from Myxococcus xanthus (strain DK1622).